A 620-amino-acid chain; its full sequence is Chaperone protein HscA homolog (620 aa).

It belongs to the heat shock protein 70 family.

Functionally, chaperone involved in the maturation of iron-sulfur cluster-containing proteins. Has a low intrinsic ATPase activity which is markedly stimulated by HscB. The polypeptide is Chaperone protein HscA homolog (Shewanella loihica (strain ATCC BAA-1088 / PV-4)).